A 610-amino-acid chain; its full sequence is Prolactin receptor (610 aa).

A signal peptide spans 1–19 (MPSALAFVLLVLNISLLKG). The Extracellular portion of the chain corresponds to 20-229 (QSPPGKPEIH…EMPNDFTLKD (210 aa)). Fibronectin type-III domains are found at residues 22–122 (PPGK…IVEP) and 124–224 (PPRN…MPND). The cysteines at positions 31 and 41 are disulfide-linked. N-linked (GlcNAc...) asparagine glycosylation occurs at N54. A disulfide bridge connects residues C70 and C81. N-linked (GlcNAc...) asparagine glycosylation is found at N99 and N127. Residues D206 and H207 each contribute to the Zn(2+) site. Residues 210–214 (WSRWS) carry the WSXWS motif motif. Residues 230–253 (TTVWIIVAILSAVICLIMVWAVAL) form a helical membrane-spanning segment. Residues 254 to 610 (KGYSMMTCIF…DPTCFMHSFH (357 aa)) are Cytoplasmic-facing. The short motif at 262–270 (IFPPVPGPK) is the Box 1 motif element. Disordered regions lie at residues 317–355 (DERLMPSHSKEYPGQGVKPTHLDPDSDSGHGSYDSHSLL), 458–482 (TGEEEVAEQKGAKSFPSDKQNTPWP), and 564–584 (AKKAPPSFEADQSEKDLASFT). The segment covering 318–327 (ERLMPSHSKE) has biased composition (basic and acidic residues). The span at 345–354 (GHGSYDSHSL) shows a compositional bias: low complexity.

Belongs to the type I cytokine receptor family. Type 1 subfamily. In terms of assembly, interacts with SMARCA1. Interacts with NEK3 and VAV2 and this interaction is prolactin-dependent.

Its subcellular location is the membrane. Functionally, this is a receptor for the anterior pituitary hormone prolactin. This Rattus norvegicus (Rat) protein is Prolactin receptor (Prlr).